Here is a 174-residue protein sequence, read N- to C-terminus: Regenerating islet-derived protein 3-gamma (174 aa).

The first 26 residues, 1-26 (MLPRITITIMSWMLLSCLMLLSQVQG), serve as a signal peptide directing secretion. Positions 27–37 (EVAKKDAPSSR) are excised as a propeptide. Disulfide bonds link C40-C51, C68-C170, and C145-C162. One can recognise a C-type lectin domain in the interval 47–171 (YGSYCYALFS…CNLELPYVCK (125 aa)). The interval 103–118 (WIGLHDPTLGYEPNRG) is sufficient to activate EXTL3. A Zn(2+)-binding site is contributed by H107. Positions 114-116 (EPN) match the EPN motif. 2 residues coordinate Zn(2+): E121 and H144.

In terms of assembly, forms a hexameric membrane-permeabilizing oligomeric pore on membrane phospholipids. The hexamer is formed by three dimers related by helical symmetry. Forms filaments, filamentation traps pore complexes and limits damage to host cells. Interacts with EXTL3. In terms of processing, proteolytic processing by trypsin removes an inhibitory N-terminal propeptide and is essential for peptidoglycan binding and antibacterial activity. In terms of tissue distribution, predominantly expressed in the small intestine, including Paneth cells (at protein level). Hardly detectable in the colon (at protein level). Highly expressed in the lung epithelium during methicillin-resistant S.aureus infection and allergic airway inflammation (at protein level). Skin injury increases its epidermal expression. Also expressed in the pancreas. Expressed by nocireceptors.

It is found in the secreted. It localises to the cytoplasm. Its activity is regulated as follows. Lipopolysaccharide inhibits pore-forming activity, explaining why is bactericidal for Gram-positive but not Gram-negative bacteria. In terms of biological role, bactericidal C-type lectin which acts exclusively against Gram-positive bacteria and mediates bacterial killing by binding to surface-exposed carbohydrate moieties of peptidoglycan. Restricts bacterial colonization of the intestinal epithelial surface and consequently limits activation of adaptive immune responses by the microbiota. Functionally, acts as a hormone in response to different stimuli like anti-inflammatory signals, such as IL17A, or gut microbiome. Is secreted by different cell types to activate its receptor EXTL3 and induce cell specific signaling pathways. Induced by IL17A in keratinocytes, regulates keratinocyte proliferation and differentiation after skin injury. In parallel, inhibits skin inflammation through the inhibition of inflammatory cytokines such as IL6 and TNF. Induced by IL22 in lung epithelial cells, inhibits cytokine production and regulates allergic airway inflammation. Induced in small intestine by inulin-enriched diet and Lactobacillus gasseri enriched microbiome, plays a role in the improvement of gut barrier function, the regulation of energy balance and glucose levels. Modulates microbiota composition in duodenal contents. Produced by nociceptor in response to endotoxins, prevents endotoxic death by targeting kynurenine pathway in microglia. Its function is as follows. Has bacteriostatic activity. Has bactericidal activity against L.monocytogenes and methicillin-resistant S.aureus. The sequence is that of Regenerating islet-derived protein 3-gamma from Mus musculus (Mouse).